We begin with the raw amino-acid sequence, 213 residues long: Ras-related protein Rab-39B (213 aa).

Positions 17, 20, 21, 22, 23, 37, and 40 each coordinate GTP. Ser-22 contributes to the Mg(2+) binding site. A switch-I region spans residues 35-43 (QVSDPTVGV). Residues Thr-40 and Asp-64 each coordinate Mg(2+). Gly-67, His-123, Lys-124, Asp-126, Ala-154, and Arg-155 together coordinate GTP. Residues 67–83 (GQERFRSITRAYYRNSV) are switch-II. Position 201 is a phosphoserine (Ser-201). 2 S-geranylgeranyl cysteine lipidation sites follow: Cys-211 and Cys-213. Cys-213 carries the post-translational modification Cysteine methyl ester.

The protein belongs to the small GTPase superfamily. Rab family. In terms of assembly, interacts (GDP-bound) with C9orf72; C9orf72 in complex with SMCR8 acts as a GEF for RAB39B. Interacts (in GTP-bound form) with PICK1 (via PDZ domain); a PICK1 homodimer may allow simultaneous association of RAB39B and GRIA2 to PICK1 which is involved in GRIA2 trafficking. Interacts with isoform c of RASSF1; the interaction is strong. Interacts with isoform a of RASSF1; the interaction is weak. Interacts with the DLG4/PSD-95. Interacts (GTP-bound) with HOPS complex components VPS39 and VPS41. It depends on Mg(2+) as a cofactor. As to expression, specifically expressed in neuron and neuronal precursors in the brain. Expression is high in all regions of the brain with highest levels observed in the hippocampus.

Its subcellular location is the cell membrane. It is found in the cytoplasmic vesicle membrane. The protein localises to the golgi apparatus. The protein resides in the cytoplasmic vesicle. It localises to the autophagosome membrane. Its subcellular location is the autolysosome membrane. The catalysed reaction is GTP + H2O = GDP + phosphate + H(+). With respect to regulation, regulated by guanine nucleotide exchange factors (GEFs) including C9orf72-SMCR8 complex, which promote the exchange of bound GDP for free GTP. Regulated by GTPase activating proteins (GAPs) which increase the GTP hydrolysis activity. Inhibited by GDP dissociation inhibitors (GDIs). Functionally, the small GTPases Rab are key regulators of intracellular membrane trafficking, from the formation of transport vesicles to their fusion with membranes. Rabs cycle between an inactive GDP-bound form and an active GTP-bound form that is able to recruit to membranes different sets of downstream effectors directly responsible for vesicle formation, movement, tethering and fusion. RAB39B is involved in autophagy and may function in autophagosome formation. Binds downstream effector PICK1 to ensure selectively GRIA2 exit from the endoplasmic reticulum to the Golgi and to regulate AMPAR composition at the post-synapses and thus synaptic transmission. May regulate the homeostasis of SNCA/alpha-synuclein. The sequence is that of Ras-related protein Rab-39B from Mus musculus (Mouse).